The sequence spans 217 residues: MNQTLLSEFGNPAERVERALDALRHGRGVLVLDDEDRENEGDMIFSAENMTVEQMALTIRHGSGIVCLCLTEERRQQLELPMMVEKNSSHYQTAFTVTIEAAEGVTTGVSAADRLTTIRAAIADNAKPSDLNRPGHVFPLRAQPGGVLTRGGHTEATVDLMTLAGLKPSGVLCELTNDDGSMAHAPEVIAFAKQHDMPVLTIEDLVAYRVAAERKAS.

Residues 37-38 (RE), aspartate 42, 150-154 (RGGHT), and glutamate 174 each bind D-ribulose 5-phosphate. Residue glutamate 38 participates in Mg(2+) binding. Histidine 153 serves as a coordination point for Mg(2+).

The protein belongs to the DHBP synthase family. Homodimer. It depends on Mg(2+) as a cofactor. Requires Mn(2+) as cofactor.

The catalysed reaction is D-ribulose 5-phosphate = (2S)-2-hydroxy-3-oxobutyl phosphate + formate + H(+). It functions in the pathway cofactor biosynthesis; riboflavin biosynthesis; 2-hydroxy-3-oxobutyl phosphate from D-ribulose 5-phosphate: step 1/1. Functionally, catalyzes the conversion of D-ribulose 5-phosphate to formate and 3,4-dihydroxy-2-butanone 4-phosphate. This is 3,4-dihydroxy-2-butanone 4-phosphate synthase from Pectobacterium carotovorum subsp. carotovorum (strain PC1).